We begin with the raw amino-acid sequence, 384 residues long: 8-amino-7-oxononanoate synthase (384 aa).

Substrate is bound at residue Arg-21. A pyridoxal 5'-phosphate-binding site is contributed by 108–109 (GF). Residue His-133 coordinates substrate. Pyridoxal 5'-phosphate-binding residues include Ser-179, His-207, and Thr-233. Position 236 is an N6-(pyridoxal phosphate)lysine (Lys-236). Residue Thr-352 participates in substrate binding.

It belongs to the class-II pyridoxal-phosphate-dependent aminotransferase family. BioF subfamily. As to quaternary structure, homodimer. Pyridoxal 5'-phosphate serves as cofactor.

It carries out the reaction 6-carboxyhexanoyl-[ACP] + L-alanine + H(+) = (8S)-8-amino-7-oxononanoate + holo-[ACP] + CO2. Its pathway is cofactor biosynthesis; biotin biosynthesis. Its function is as follows. Catalyzes the decarboxylative condensation of pimeloyl-[acyl-carrier protein] and L-alanine to produce 8-amino-7-oxononanoate (AON), [acyl-carrier protein], and carbon dioxide. This chain is 8-amino-7-oxononanoate synthase, found in Shigella boydii serotype 18 (strain CDC 3083-94 / BS512).